A 469-amino-acid polypeptide reads, in one-letter code: Citrate synthase, mitochondrial (469 aa).

Residues 1-30 (MSFLTVSRLAPKLLNSKNATYFLVAARNAS) constitute a mitochondrion transit peptide. Catalysis depends on residues H304 and H350. R359 is an oxaloacetate binding site. The active site involves D405. Positions 431 and 451 each coordinate oxaloacetate.

The protein belongs to the citrate synthase family. As to quaternary structure, homodimer.

The protein resides in the mitochondrion matrix. It catalyses the reaction oxaloacetate + acetyl-CoA + H2O = citrate + CoA + H(+). It participates in carbohydrate metabolism; tricarboxylic acid cycle; isocitrate from oxaloacetate: step 1/2. Its function is as follows. Key enzyme of the Krebs tricarboxylic acid cycle which catalyzes the synthesis of citrate from acetyl coenzyme A and oxaloacetate. This chain is Citrate synthase, mitochondrial (cs), found in Xiphias gladius (Swordfish).